We begin with the raw amino-acid sequence, 184 residues long: MLIILKENIRTLGKLGEVVKVKPGYARNFLFPQRKAVKATKENLTKLEEQRLLLEEENIKRLNVAKELALSLHDKFVVLIKQASEDGKIFGSVTTREIAKILLQEGHVIDHRSLSFGGISIKNLGEYQVNVELHSEVVVPITIYVVKSETDANELRQVKLQNQKSEQQEAEQDANKEAADGDDS.

Residues 160 to 184 (LQNQKSEQQEAEQDANKEAADGDDS) form a disordered region. Positions 173-184 (DANKEAADGDDS) are enriched in basic and acidic residues.

It belongs to the bacterial ribosomal protein bL9 family.

Binds to the 23S rRNA. This chain is Large ribosomal subunit protein bL9, found in Wolbachia sp. subsp. Drosophila simulans (strain wRi).